A 38-amino-acid polypeptide reads, in one-letter code: MTPSLGSFIASLFAGAFIALAIGGVLVFISQSDRVTRS.

The helical transmembrane segment at 9–29 (IASLFAGAFIALAIGGVLVFI) threads the bilayer.

This sequence belongs to the PsbX family. Type 1 subfamily. As to quaternary structure, PSII is composed of 1 copy each of membrane proteins PsbA, PsbB, PsbC, PsbD, PsbE, PsbF, PsbH, PsbI, PsbJ, PsbK, PsbL, PsbM, PsbT, PsbX, PsbY, PsbZ, Psb30/Ycf12, at least 3 peripheral proteins of the oxygen-evolving complex and a large number of cofactors. It forms dimeric complexes.

The protein localises to the plastid. Its subcellular location is the chloroplast thylakoid membrane. Its function is as follows. Involved in the binding and/or turnover of quinones at the Q(B) site of photosystem II (PSII). PSII is a light-driven water plastoquinone oxidoreductase, using light energy to abstract electrons from H(2)O, generating a proton gradient subsequently used for ATP formation. This Phaeodactylum tricornutum (strain CCAP 1055/1) protein is Photosystem II reaction center protein X.